We begin with the raw amino-acid sequence, 1794 residues long: Non-reducing polyketide synthase nscA (1794 aa).

The N-terminal acylcarrier protein transacylase domain (SAT) stretch occupies residues 19–256 (DLKDLFRRLH…PLPVYDGLCH (238 aa)). A Ketosynthase family 3 (KS3) domain is found at 389–822 (ASKLAIVGMA…GGNTTVLLED (434 aa)). The segment at 427-448 (PDRFDLNTHYDPTGKTENATQT) is disordered. Positions 428–440 (DRFDLNTHYDPTG) are enriched in basic and acidic residues. Catalysis depends on for beta-ketoacyl synthase activity residues Cys562, His697, and His740. Residues 928 to 1249 (FTGQGAYYSG…LVTLHLAGLT (322 aa)) form a malonyl-CoA:ACP transacylase (MAT) domain region. The tract at residues 1314–1633 (TSLVHQITAE…RLLMDRFFSP (320 aa)) is product template (PT) domain. The segment at 1318–1454 (HQITAETVEA…GVVRFEDPAA (137 aa)) is N-terminal hotdog fold. Residues 1318–1628 (HQITAETVEA…FRRVPRLLMD (311 aa)) enclose the PKS/mFAS DH domain. Residue His1350 is the Proton acceptor; for dehydratase activity of the active site. The segment at 1482 to 1628 (ASKLSKPLAY…FRRVPRLLMD (147 aa)) is C-terminal hotdog fold. Asp1539 functions as the Proton donor; for dehydratase activity in the catalytic mechanism. Disordered stretches follow at residues 1637–1665 (SHAE…EAPA) and 1682–1718 (ASKS…GDPV). Polar residues-rich tracts occupy residues 1644-1655 (QETAPSATSVKK) and 1685-1701 (SEVS…QESP). A Carrier domain is found at 1717–1794 (PVDAGVVGQC…EMTAWLEEYC (78 aa)). Ser1754 carries the O-(pantetheine 4'-phosphoryl)serine modification.

Pantetheine 4'-phosphate serves as cofactor.

It participates in secondary metabolite biosynthesis. Its function is as follows. Non-reducing polyketide synthase; part of the gene cluster that mediates the biosynthesis of neosartoricin, a prenylated anthracenone that exhibits T-cell antiproliferative activity, suggestive of a physiological role as an immunosuppressive agent. The non-reducing polyketide synthase nscA probably synthesizes and cyclizes the decaketide backbone. The hydrolase nscB then mediates the product release through hydrolysis followed by spontaneous decarboxylation. The prenyltransferase nscD catalyzes the addition of the dimethylallyl group to the aromatic C5. The FAD-dependent monooxygenase nscC is then responsible for the stereospecific hydroxylation at C2. There is no gene encoding O-acetyltransferase in the nsc gene cluster; thus, the last step of 2-O-acetylation leading to neosartoricin may be catalyzed by an unidentified O-acetyltransferase. The polypeptide is Non-reducing polyketide synthase nscA (Neosartorya fischeri (strain ATCC 1020 / DSM 3700 / CBS 544.65 / FGSC A1164 / JCM 1740 / NRRL 181 / WB 181) (Aspergillus fischerianus)).